The sequence spans 696 residues: DNA ligase (696 aa).

NAD(+) is bound by residues 55–59 (DYEFD), 105–106 (SL), and Glu137. The active-site N6-AMP-lysine intermediate is the Lys139. The NAD(+) site is built by Arg160, Glu194, Lys310, and Lys334. Positions 428, 431, 446, and 451 each coordinate Zn(2+). Residues 615-696 (NVNPNFVGKN…EFIELKDKFD (82 aa)) enclose the BRCT domain.

It belongs to the NAD-dependent DNA ligase family. LigA subfamily. Requires Mg(2+) as cofactor. It depends on Mn(2+) as a cofactor.

It catalyses the reaction NAD(+) + (deoxyribonucleotide)n-3'-hydroxyl + 5'-phospho-(deoxyribonucleotide)m = (deoxyribonucleotide)n+m + AMP + beta-nicotinamide D-nucleotide.. Functionally, DNA ligase that catalyzes the formation of phosphodiester linkages between 5'-phosphoryl and 3'-hydroxyl groups in double-stranded DNA using NAD as a coenzyme and as the energy source for the reaction. It is essential for DNA replication and repair of damaged DNA. This is DNA ligase from Fusobacterium nucleatum subsp. nucleatum (strain ATCC 25586 / DSM 15643 / BCRC 10681 / CIP 101130 / JCM 8532 / KCTC 2640 / LMG 13131 / VPI 4355).